The following is a 327-amino-acid chain: Aspartate carbamoyltransferase catalytic subunit (327 aa).

Residues Arg54 and Thr55 each coordinate carbamoyl phosphate. An L-aspartate-binding site is contributed by Lys82. The carbamoyl phosphate site is built by Arg104, His134, and Gln137. Arg177 and Arg232 together coordinate L-aspartate. Positions 280 and 281 each coordinate carbamoyl phosphate.

Belongs to the aspartate/ornithine carbamoyltransferase superfamily. ATCase family. Heterododecamer (2C3:3R2) of six catalytic PyrB chains organized as two trimers (C3), and six regulatory PyrI chains organized as three dimers (R2).

The catalysed reaction is carbamoyl phosphate + L-aspartate = N-carbamoyl-L-aspartate + phosphate + H(+). Its pathway is pyrimidine metabolism; UMP biosynthesis via de novo pathway; (S)-dihydroorotate from bicarbonate: step 2/3. In terms of biological role, catalyzes the condensation of carbamoyl phosphate and aspartate to form carbamoyl aspartate and inorganic phosphate, the committed step in the de novo pyrimidine nucleotide biosynthesis pathway. The protein is Aspartate carbamoyltransferase catalytic subunit of Micrococcus luteus (strain ATCC 4698 / DSM 20030 / JCM 1464 / CCM 169 / CCUG 5858 / IAM 1056 / NBRC 3333 / NCIMB 9278 / NCTC 2665 / VKM Ac-2230) (Micrococcus lysodeikticus).